Reading from the N-terminus, the 111-residue chain is uncharacterized protein (111 aa).

This sequence belongs to the asfivirus E111R family.

This is an uncharacterized protein from Ornithodoros (relapsing fever ticks).